A 260-amino-acid polypeptide reads, in one-letter code: Flap endonuclease Xni (260 aa).

Mg(2+) is bound at residue Asp109. The 95-residue stretch at 165-259 folds into the 5'-3' exonuclease domain; sequence VKPSQLADYW…DIRFTGPNKA (95 aa). 4 residues coordinate K(+): Leu176, Pro185, Val187, and Val190. Residues 189-194 form an interaction with DNA region; that stretch reads GVGPKA.

The protein belongs to the Xni family. It depends on Mg(2+) as a cofactor. The cofactor is K(+).

In terms of biological role, has flap endonuclease activity. During DNA replication, flap endonucleases cleave the 5'-overhanging flap structure that is generated by displacement synthesis when DNA polymerase encounters the 5'-end of a downstream Okazaki fragment. This is Flap endonuclease Xni from Vibrio campbellii (strain ATCC BAA-1116).